Here is a 120-residue protein sequence, read N- to C-terminus: NAD(P)H-quinone oxidoreductase subunit 3, chloroplastic (120 aa).

3 helical membrane-spanning segments follow: residues 9-29 (IFWA…FISG), 64-84 (MFAL…PWAM), and 88-108 (VLGV…IVGL).

This sequence belongs to the complex I subunit 3 family. NDH is composed of at least 16 different subunits, 5 of which are encoded in the nucleus.

The protein localises to the plastid. It is found in the chloroplast thylakoid membrane. The catalysed reaction is a plastoquinone + NADH + (n+1) H(+)(in) = a plastoquinol + NAD(+) + n H(+)(out). It catalyses the reaction a plastoquinone + NADPH + (n+1) H(+)(in) = a plastoquinol + NADP(+) + n H(+)(out). In terms of biological role, NDH shuttles electrons from NAD(P)H:plastoquinone, via FMN and iron-sulfur (Fe-S) centers, to quinones in the photosynthetic chain and possibly in a chloroplast respiratory chain. The immediate electron acceptor for the enzyme in this species is believed to be plastoquinone. Couples the redox reaction to proton translocation, and thus conserves the redox energy in a proton gradient. This is NAD(P)H-quinone oxidoreductase subunit 3, chloroplastic from Guizotia abyssinica (Niger).